The following is a 5381-amino-acid chain: Protein purity of essence (5381 aa).

6 disordered regions span residues 140-174 (KHPE…PKLE), 339-364 (QQQT…TSKD), 599-621 (SPET…QKSA), 683-709 (RNDS…SSGS), 1162-1212 (SGGD…STET), and 1632-1659 (QAAQ…QSER). A compositionally biased stretch (low complexity) spans 339-350 (QQQTAAAASTSQ). Composition is skewed to low complexity over residues 690–709 (SPPS…SSGS) and 1167–1176 (SSCTSAASSS). Positions 1632-1646 (QAAQPNPSEESSQAC) are enriched in polar residues. Residues 1647 to 1658 (DHSEGGEQRQSE) are compositionally biased toward basic and acidic residues. The UBR-type zinc-finger motif lies at 1815 to 1884 (KLCTFSQTQK…EDGSCQALSR (70 aa)). Disordered stretches follow at residues 1917-1939 (KRSN…KDSI), 2443-2479 (KNTT…KQLT), 2632-2652 (PDDS…TATQ), 3037-3143 (VSAG…DNNE), 3537-3562 (KQQQ…DREK), and 4247-4280 (HHQQ…KEAA). Composition is skewed to polar residues over residues 1920 to 1930 (NTAPGATQQQH), 2470 to 2479 (SSQQHQKQLT), 2643 to 2652 (SGPTPVTATQ), and 3048 to 3058 (NVATDGSTLRT). Residues 3065 to 3075 (GSGGSESGGSG) show a composition bias toward gly residues. Positions 3084–3104 (ARSSNFGDHPNTTPPRQSCSS) are enriched in polar residues. A compositionally biased stretch (gly residues) spans 3119–3132 (SGSGGSASVPGGGL). The segment at 4904–5374 (PSLKYILRFL…SFIEDLLASL (471 aa)) is UBR4 E3 catalytic module. The segment at 5022–5136 (GLTCFICREG…SSYMQESTQR (115 aa)) adopts a HemiRING-type zinc-finger fold. Zn(2+) is bound by residues cysteine 5025, cysteine 5028, histidine 5074, and cysteine 5077. Residues 5139–5374 (ISYTSSIHDL…SFIEDLLASL (236 aa)) enclose the UZI domain.

Belongs to the UBR4 family.

Its function is as follows. Has a role in growth of the perineurial glial layer of the larval peripheral nerve. May have a role in male fertility and eye development or function. May bind calmodulin. This Drosophila pseudoobscura pseudoobscura (Fruit fly) protein is Protein purity of essence.